Consider the following 94-residue polypeptide: Beta-diguetoxin-Dc1a (94 aa).

The signal sequence occupies residues 1–17 (MKVFVVLLCLSLAAVYA). Residues 18-38 (LEERLDKDADIMLDSPADMER) constitute a propeptide that is removed on maturation. Intrachain disulfides connect C50-C63, C57-C77, C62-C91, and C79-C89.

The protein belongs to the neurotoxin 26 (DTX) family. As to expression, expressed by the venom gland.

The protein resides in the secreted. In terms of biological role, insecticidal toxin. This toxin promotes opening of insect Nav channels. The toxin binds to the S1-S2 and S3-S4 loops in the domain II voltage-sensor of insect Nav channels (i.e., receptor site 4). The American cockroach P.americana is largely resistant to the effects of this toxin due to an unusual sequence within the domain II S1-S2 loop. In vivo, paralyzes lepidopteran and dipteran larvae. Paralyzed insects ultimately die from secondary effects of starvation and dehydration. The chain is Beta-diguetoxin-Dc1a from Diguetia canities (Desert bush spider).